Here is a 191-residue protein sequence, read N- to C-terminus: NADH-quinone oxidoreductase subunit B (191 aa).

Residues Cys-70, Cys-71, Cys-135, and Cys-165 each contribute to the [4Fe-4S] cluster site.

This sequence belongs to the complex I 20 kDa subunit family. NDH-1 is composed of 14 different subunits. Subunits NuoB, C, D, E, F, and G constitute the peripheral sector of the complex. [4Fe-4S] cluster serves as cofactor.

The protein resides in the cell inner membrane. The enzyme catalyses a quinone + NADH + 5 H(+)(in) = a quinol + NAD(+) + 4 H(+)(out). Functionally, NDH-1 shuttles electrons from NADH, via FMN and iron-sulfur (Fe-S) centers, to quinones in the respiratory chain. The immediate electron acceptor for the enzyme in this species is believed to be ubiquinone. Couples the redox reaction to proton translocation (for every two electrons transferred, four hydrogen ions are translocated across the cytoplasmic membrane), and thus conserves the redox energy in a proton gradient. In Parvibaculum lavamentivorans (strain DS-1 / DSM 13023 / NCIMB 13966), this protein is NADH-quinone oxidoreductase subunit B.